A 453-amino-acid chain; its full sequence is Probable L-galactonate transporter (453 aa).

A disordered region spans residues 1-23; sequence MEKENITIDPRSSFTPSSSADIP. Residues 1–42 are Periplasmic-facing; it reads MEKENITIDPRSSFTPSSSADIPVPPDGLVQRSTRIKRIQTT. A compositionally biased stretch (polar residues) spans 10-20; it reads PRSSFTPSSSA. The helical transmembrane segment at 43 to 63 threads the bilayer; that stretch reads AMLLLFFAAVINYLDRSSLSV. At 64–71 the chain is on the cytoplasmic side; that stretch reads ANLTIREE. The chain crosses the membrane as a helical span at residues 72–92; it reads LGLSATEIGALLSVFSLAYGI. Topologically, residues 93 to 107 are periplasmic; sequence AQLPCGPLLDRKGPR. The chain crosses the membrane as a helical span at residues 108-128; it reads LMLGLGMFFWSLFQAMSGMVH. Residues 129-174 lie on the Cytoplasmic side of the membrane; sequence NFTQFVLVRIGMGIGEAPMNPCGVKVINDWFNIKERGRPMGFFNAA. Residues 175 to 195 form a helical membrane-spanning segment; the sequence is STIGVAVSPPILAAMMLVMGW. A topological domain (periplasmic) is located at residue Arg-196. The chain crosses the membrane as a helical span at residues 197-217; sequence GMFITIGVLGIFLAIGWYMLY. Residues 218–259 are Cytoplasmic-facing; it reads RNREHVELTAVEQAYLNAGSVNARRDPLSFAEWRSLFRNRTM. Residues 260–280 form a helical membrane-spanning segment; that stretch reads WGMMLGFSGINYTAWLYLAWL. Residues 281-295 are Periplasmic-facing; it reads PGYLQTAYNLDLKST. The chain crosses the membrane as a helical span at residues 296 to 316; it reads GLMAAIPFLFGAAGMLVNGYV. Residues 317 to 332 lie on the Cytoplasmic side of the membrane; it reads TDWLVKGGMAPIKSRK. The chain crosses the membrane as a helical span at residues 333–353; sequence ICIIAGMFCSAAFTLIVPQAT. Over 354–359 the chain is Periplasmic; the sequence is TSMTAV. A helical membrane pass occupies residues 360–380; sequence LLIGMALFCIHFAGTSCWGLI. Residues 381–394 are Cytoplasmic-facing; that stretch reads HVAVASRMTASVGS. Residues 395–415 form a helical membrane-spanning segment; the sequence is IQNFASFICASFAPIITGFIV. Topologically, residues 416-422 are periplasmic; sequence DTTHSFR. Residues 423-443 traverse the membrane as a helical segment; the sequence is LALIICGCVTAAGALAYIFLV. Residues 444 to 453 lie on the Cytoplasmic side of the membrane; it reads RQPINDPRKD.

This sequence belongs to the major facilitator superfamily. Phthalate permease family.

Its subcellular location is the cell inner membrane. The catalysed reaction is L-galactonate(in) + H(+)(in) = L-galactonate(out) + H(+)(out). Functionally, probably responsible for the transport of L-galactonate from the periplasm across the inner membrane. Is essential for growth on L-galactonate as the sole carbon source. The chain is Probable L-galactonate transporter (lgoT) from Escherichia coli (strain K12).